Consider the following 144-residue polypeptide: Large ribosomal subunit protein uL16 (144 aa).

The protein belongs to the universal ribosomal protein uL16 family. In terms of assembly, part of the 50S ribosomal subunit.

Functionally, binds 23S rRNA and is also seen to make contacts with the A and possibly P site tRNAs. The polypeptide is Large ribosomal subunit protein uL16 (Bacillus subtilis (strain 168)).